The chain runs to 378 residues: Mannitol-1-phosphate 5-dehydrogenase (378 aa).

4-15 lines the NAD(+) pocket; sequence SVHFGAGNIGRG.

The protein belongs to the mannitol dehydrogenase family.

It carries out the reaction D-mannitol 1-phosphate + NAD(+) = beta-D-fructose 6-phosphate + NADH + H(+). This Streptococcus pneumoniae (strain 70585) protein is Mannitol-1-phosphate 5-dehydrogenase.